The following is a 1055-amino-acid chain: Pre-mRNA-splicing factor ATP-dependent RNA helicase-like protein cdc28 (1055 aa).

A compositionally biased stretch (basic and acidic residues) spans 67 to 78 (PREGSRPKENYN). The segment at 67-184 (PREGSRPKEN…TERLNDLRER (118 aa)) is disordered. Over residues 112–121 (PLKKKSRSKT) the composition is skewed to basic residues. The segment covering 122–132 (PKREIARRQRD) has biased composition (basic and acidic residues). Residues 133–145 (EDEWESDEYEEVV) are compositionally biased toward acidic residues. The span at 163 to 184 (QNHDYEKSSDPETERLNDLRER) shows a compositional bias: basic and acidic residues. Residues 428–592 (LKAINEYQVL…FDEAPVFYVP (165 aa)) form the Helicase ATP-binding domain. 441–448 (AETGSGKT) contributes to the ATP binding site. The DEAH box signature appears at 539–542 (DEAH). Residues 617-790 (TILQIHTTQP…NIVLLLKSLG (174 aa)) form the Helicase C-terminal domain.

It belongs to the DEAD box helicase family. DEAH subfamily. DDX16/PRP8 sub-subfamily.

It localises to the nucleus. The catalysed reaction is ATP + H2O = ADP + phosphate + H(+). Involved in pre-mRNA splicing. Is required together with ATP and at least one other factor, for the first cleavage-ligation reaction. Functions as a molecular motor in the activation of the precatalytic spliceosome for the first transesterification reaction of pre-mRNA splicing by hydrolyzing ATP to cause the activation of the spliceosome without the occurrence of splicing. The sequence is that of Pre-mRNA-splicing factor ATP-dependent RNA helicase-like protein cdc28 (cdc28) from Schizosaccharomyces pombe (strain 972 / ATCC 24843) (Fission yeast).